The following is a 271-amino-acid chain: NADH-quinone oxidoreductase subunit B (271 aa).

Residues Cys-37, Cys-38, Cys-103, and Cys-132 each contribute to the [4Fe-4S] cluster site. Residues 227 to 271 (LAPPSVFGRAKRIPVDPKPSDEARAHGPGPTTESIGDVDGPDRGI) form a disordered region. The span at 239–251 (IPVDPKPSDEARA) shows a compositional bias: basic and acidic residues.

The protein belongs to the complex I 20 kDa subunit family. In terms of assembly, NDH-1 is composed of 14 different subunits. Subunits NuoB, C, D, E, F, and G constitute the peripheral sector of the complex. [4Fe-4S] cluster serves as cofactor.

Its subcellular location is the cell membrane. The enzyme catalyses a quinone + NADH + 5 H(+)(in) = a quinol + NAD(+) + 4 H(+)(out). NDH-1 shuttles electrons from NADH, via FMN and iron-sulfur (Fe-S) centers, to quinones in the respiratory chain. The immediate electron acceptor for the enzyme in this species is believed to be a menaquinone. Couples the redox reaction to proton translocation (for every two electrons transferred, four hydrogen ions are translocated across the cytoplasmic membrane), and thus conserves the redox energy in a proton gradient. This Frankia casuarinae (strain DSM 45818 / CECT 9043 / HFP020203 / CcI3) protein is NADH-quinone oxidoreductase subunit B.